Here is a 324-residue protein sequence, read N- to C-terminus: Coproporphyrin III ferrochelatase (324 aa).

Fe(2+) contacts are provided by histidine 184 and glutamate 266.

It belongs to the ferrochelatase family.

It is found in the cytoplasm. It catalyses the reaction Fe-coproporphyrin III + 2 H(+) = coproporphyrin III + Fe(2+). Its pathway is porphyrin-containing compound metabolism; protoheme biosynthesis. Functionally, involved in coproporphyrin-dependent heme b biosynthesis. Catalyzes the insertion of ferrous iron into coproporphyrin III to form Fe-coproporphyrin III. This Lactiplantibacillus plantarum (strain ATCC BAA-793 / NCIMB 8826 / WCFS1) (Lactobacillus plantarum) protein is Coproporphyrin III ferrochelatase.